Consider the following 874-residue polypeptide: Ectonucleotide pyrophosphatase/phosphodiesterase family member 3 (874 aa).

Residues 1–11 (MQSTLNLSTEE) lie on the Cytoplasmic side of the membrane. A helical; Signal-anchor for type II membrane protein membrane pass occupies residues 12–30 (PVKRNTVKKYKIICIVLLI). Topologically, residues 31-874 (LLVAVSLALG…TYLPVFETVI (844 aa)) are extracellular. 2 consecutive SMB domains span residues 50–93 (EQGS…VQST) and 94–138 (QIWT…GETS). 10 disulfides stabilise this stretch: Cys54–Cys71, Cys58–Cys89, Cys69–Cys82, Cys75–Cys81, Cys98–Cys115, Cys103–Cys133, Cys113–Cys126, Cys119–Cys125, Cys144–Cys190, and Cys152–Cys364. Residues 78-80 (RGD) carry the Cell attachment site motif. Residues 160-544 (PVILFSMDGF…HGSLNHLLKV (385 aa)) are phosphodiesterase. Asp167 is a Zn(2+) binding site. Lys204 provides a ligand contact to ATP. Residue Thr205 coordinates Zn(2+). Thr205 acts as the Nucleophile in catalysis. ATP is bound at residue Asn226. Asn236 carries an N-linked (GlcNAc...) asparagine glycan. Asp275 lines the ATP pocket. A glycan (N-linked (GlcNAc...) asparagine) is linked at Asn279. Tyr289 contacts ATP. Asn290 carries N-linked (GlcNAc...) asparagine glycosylation. Zn(2+) contacts are provided by Asp325, His329, Asp372, and His373. Cystine bridges form between Cys380/Cys477, Cys428/Cys817, Cys561/Cys622, Cys574/Cys678, Cys576/Cys663, and Cys786/Cys796. N-linked (GlcNAc...) asparagine glycosylation is present at Asn425. His482 contacts Zn(2+). Asn532 carries an N-linked (GlcNAc...) asparagine glycan. A nuclease region spans residues 581-874 (TNSDLERVNQ…TYLPVFETVI (294 aa)). 3 N-linked (GlcNAc...) asparagine glycosylation sites follow: Asn677, Asn686, and Asn698. Residues Asp751, Asp755, His757, and Asp759 each contribute to the Ca(2+) site. Residues Asn770, Asn788, and Asn820 are each glycosylated (N-linked (GlcNAc...) asparagine).

The protein belongs to the nucleotide pyrophosphatase/phosphodiesterase family. Monomer and homodimer. It depends on Zn(2+) as a cofactor. Post-translationally, N-glycosylated. N-glycosylation is necessary for normal transport to the cell membrane, but is not the apical targeting signal.

The protein resides in the cell membrane. Its subcellular location is the apical cell membrane. It is found in the secreted. The catalysed reaction is a ribonucleoside 5'-triphosphate + H2O = a ribonucleoside 5'-phosphate + diphosphate + H(+). It catalyses the reaction ATP + H2O = AMP + diphosphate + H(+). The enzyme catalyses CTP + H2O = CMP + diphosphate + H(+). It carries out the reaction GTP + H2O = GMP + diphosphate + H(+). The catalysed reaction is UTP + H2O = UMP + diphosphate + H(+). It catalyses the reaction UDP-N-acetyl-alpha-D-glucosamine + H2O = N-acetyl-alpha-D-glucosamine 1-phosphate + UMP + 2 H(+). The enzyme catalyses P(1),P(3)-bis(5'-adenosyl) triphosphate + H2O = AMP + ADP + 2 H(+). It carries out the reaction P(1),P(4)-bis(5'-adenosyl) tetraphosphate + H2O = AMP + ATP + 2 H(+). The catalysed reaction is P(1),P(5)-bis(5'-adenosyl) pentaphosphate + H2O = adenosine 5'-tetraphosphate + AMP + 2 H(+). It catalyses the reaction P(1),P(4)-bis(5'-guanosyl) tetraphosphate + H2O = GMP + GTP + 2 H(+). The enzyme catalyses Hydrolytically removes 5'-nucleotides successively from the 3'-hydroxy termini of 3'-hydroxy-terminated oligonucleotides.. Hydrolase that metabolizes extracellular nucleotides, including ATP, GTP, UTP and CTP. Limits mast cells and basophils response during inflammation and during the chronic phases of allergic responses by eliminating extracellular ATP, a signaling molecule activating these cells in an autocrine manner. Metabolizes extracellular ATP in the lumen of the small intestine, and thereby prevents ATP-induced apoptosis of intestinal plasmacytoid dendritic cells. Has a broad specificity and can also hydrolyze UDP-GlcNAc into UMP and GlcNAc-1-phosphate and potentially several other intracellular nucleotide sugars, including UDP-GalNAc, CMP-NeuAc, GDP-Fuc, and UDP-GlcA. Thereby, could modulate glycan biosynthesis and protein glycosylation. Can hydrolyze extracellular dinucleoside polyphosphates, including the vasoactive adenosine polyphosphates as well. In addition, displays an alkaline phosphodiesterase activity in vitro. This is Ectonucleotide pyrophosphatase/phosphodiesterase family member 3 (ENPP3) from Bos taurus (Bovine).